A 554-amino-acid polypeptide reads, in one-letter code: MWLHALVWASLAVCPILGHSLLPPVVDTTQGKVLGKYISLEGFEQPVAVFLGVPFAKPPLGSLRFAPPQPAEPWSFVKNATSYPPMCSQDAGWAKILSDMFSTEKEILPLKISEDCLYLNIYSPADLTKSSQLPVMVWIHGGGLVIGGASPYNGLALSAHENVVVVTIQYRLGIWGLFSTGDEHSPGNWAHLDQLAALRWVQDNIANFGGNPDSVTIFGESSGGISVSVLVLSPLGKDLFHRAISESGVVINTNVGKKNIQAVNEIIATLSQCNDTSSAAMVQCLRQKTESELLEISGKLVQYNISLSTMIDGVVLPKAPEEILAEKSFNTVPYIVGFNKQEFGWIIPMMLQNLLPEGKMNEETASLLLRRFHSELNISESMIPAVIEQYLRGVDDPAKKSELILDMFGDIFFGIPAVLLSRSLRDAGVSTYMYEFRYRPSFVSDKRPQTVEGDHGDEIFFVFGAPLLKEGASEEETNLSKMVMKFWANFARNGNPNGEGLPHWPEYDEQEGYLQIGATTQQAQRLKAEEVAFWTELLAKNPPETDPTEHTEHK.

The first 18 residues, 1 to 18 (MWLHALVWASLAVCPILG), serve as a signal peptide directing secretion. Asparagine 79 is a glycosylation site (N-linked (GlcNAc...) asparagine). Cysteine 87 and cysteine 116 are oxidised to a cystine. Serine 221 serves as the catalytic Acyl-ester intermediate. A disulfide bond links cysteine 273 and cysteine 284. N-linked (GlcNAc...) asparagine glycosylation is found at asparagine 274 and asparagine 304. The active-site Charge relay system is glutamate 342. The N-linked (GlcNAc...) asparagine glycan is linked to asparagine 377. The active-site Charge relay system is the histidine 455. Position 473 is a phosphoserine (serine 473). A glycan (N-linked (GlcNAc...) asparagine) is linked at asparagine 478. Residues 551-554 (TEHK) carry the Prevents secretion from ER motif.

This sequence belongs to the type-B carboxylesterase/lipase family. As to expression, expressed in lung, kidney and liver.

It localises to the endoplasmic reticulum lumen. The enzyme catalyses a carboxylic ester + H2O = an alcohol + a carboxylate + H(+). In terms of biological role, involved in the detoxification of xenobiotics and in the activation of ester and amide prodrugs. Involved in the extracellular metabolism of lung surfactant. This chain is Carboxylesterase 1C (Ces1c), found in Mus musculus (Mouse).